The sequence spans 190 residues: Translation machinery-associated protein 22 (190 aa).

The disordered stretch occupies residues 63 to 83; that stretch reads LNVSGTKDSNAEEQPAKLTKE. The region spanning 99–170 is the SUI1 domain; that stretch reads VLIKTIERTK…DIFDFILEKF (72 aa).

It belongs to the DENR family. Interacts with the 40S ribosomal subunit.

It is found in the cytoplasm. This chain is Translation machinery-associated protein 22 (tma22), found in Schizosaccharomyces pombe (strain 972 / ATCC 24843) (Fission yeast).